Consider the following 242-residue polypeptide: MRDNSTFIQGLRSLGMDLNKHQLEQFEIYYDLLIEWNSFMNLTAITEYEEVIQKHFLDSLSLIKSYQIKTGDTLLDMGTGAGFPGIPLKIAYPDLNVLLMDSLNKRINFLNEVINRLELKNISAMHGRAEEQARKLDFREKFDIVVSRAVARTASLAELCLPYVKKGGYFIPYKSGKVTEELEEAEYALECLGGKLEEKVTFSLPDTDMERTLICIKKVKETPKSYPRAGGKPLKMPLIRKK.

Residues Gly78, Phe83, Ala129–Glu130, and Arg148 each bind S-adenosyl-L-methionine.

The protein belongs to the methyltransferase superfamily. RNA methyltransferase RsmG family.

The protein localises to the cytoplasm. In terms of biological role, specifically methylates the N7 position of a guanine in 16S rRNA. The polypeptide is Ribosomal RNA small subunit methyltransferase G (Lachnoclostridium phytofermentans (strain ATCC 700394 / DSM 18823 / ISDg) (Clostridium phytofermentans)).